The sequence spans 320 residues: Malate dehydrogenase (320 aa).

Residues 10–15 (GSGMIG) and Asp-34 contribute to the NAD(+) site. The substrate site is built by Arg-83 and Arg-89. Residues Asn-96 and 119–121 (ITN) each bind NAD(+). Substrate is bound by residues Asn-121 and Arg-152. Residue His-176 is the Proton acceptor of the active site.

Belongs to the LDH/MDH superfamily. MDH type 3 family.

It carries out the reaction (S)-malate + NAD(+) = oxaloacetate + NADH + H(+). Functionally, catalyzes the reversible oxidation of malate to oxaloacetate. In Brucella abortus (strain S19), this protein is Malate dehydrogenase.